The chain runs to 387 residues: Lipid-A-disaccharide synthase (387 aa).

It belongs to the LpxB family.

It catalyses the reaction a lipid X + a UDP-2-N,3-O-bis[(3R)-3-hydroxyacyl]-alpha-D-glucosamine = a lipid A disaccharide + UDP + H(+). The protein operates within bacterial outer membrane biogenesis; LPS lipid A biosynthesis. Condensation of UDP-2,3-diacylglucosamine and 2,3-diacylglucosamine-1-phosphate to form lipid A disaccharide, a precursor of lipid A, a phosphorylated glycolipid that anchors the lipopolysaccharide to the outer membrane of the cell. In Nitrosococcus oceani (strain ATCC 19707 / BCRC 17464 / JCM 30415 / NCIMB 11848 / C-107), this protein is Lipid-A-disaccharide synthase.